The primary structure comprises 179 residues: Ribosome maturation factor RimM (179 aa).

Positions 102–175 constitute a PRC barrel domain; that stretch reads VEMWWDRDLV…RIVVDPPPGL (74 aa).

This sequence belongs to the RimM family. As to quaternary structure, binds ribosomal protein uS19.

The protein resides in the cytoplasm. Functionally, an accessory protein needed during the final step in the assembly of 30S ribosomal subunit, possibly for assembly of the head region. Essential for efficient processing of 16S rRNA. May be needed both before and after RbfA during the maturation of 16S rRNA. It has affinity for free ribosomal 30S subunits but not for 70S ribosomes. The chain is Ribosome maturation factor RimM from Frankia casuarinae (strain DSM 45818 / CECT 9043 / HFP020203 / CcI3).